A 344-amino-acid chain; its full sequence is Anthranilate phosphoribosyltransferase (344 aa).

5-phospho-alpha-D-ribose 1-diphosphate-binding positions include G84, G87–D88, T92, N94–T97, K112–S120, and S124. Residue G84 participates in anthranilate binding. S96 contributes to the Mg(2+) binding site. Residue N115 participates in anthranilate binding. Residue R170 participates in anthranilate binding. Positions 229 and 230 each coordinate Mg(2+).

Belongs to the anthranilate phosphoribosyltransferase family. In terms of assembly, homodimer. Mg(2+) is required as a cofactor.

The catalysed reaction is N-(5-phospho-beta-D-ribosyl)anthranilate + diphosphate = 5-phospho-alpha-D-ribose 1-diphosphate + anthranilate. It functions in the pathway amino-acid biosynthesis; L-tryptophan biosynthesis; L-tryptophan from chorismate: step 2/5. In terms of biological role, catalyzes the transfer of the phosphoribosyl group of 5-phosphorylribose-1-pyrophosphate (PRPP) to anthranilate to yield N-(5'-phosphoribosyl)-anthranilate (PRA). This chain is Anthranilate phosphoribosyltransferase, found in Xylella fastidiosa (strain 9a5c).